Reading from the N-terminus, the 323-residue chain is Fructose-1,6-bisphosphatase class 1 (323 aa).

Mg(2+)-binding residues include E93, D114, L116, and D117. Residues 117 to 120 (DGSS), N205, Y233, and K263 each bind substrate. A Mg(2+)-binding site is contributed by E269.

Belongs to the FBPase class 1 family. Homotetramer. Mg(2+) is required as a cofactor.

Its subcellular location is the cytoplasm. The catalysed reaction is beta-D-fructose 1,6-bisphosphate + H2O = beta-D-fructose 6-phosphate + phosphate. The protein operates within carbohydrate biosynthesis; gluconeogenesis. The protein is Fructose-1,6-bisphosphatase class 1 of Sulfurihydrogenibium sp. (strain YO3AOP1).